The chain runs to 262 residues: Indole-3-glycerol phosphate synthase (262 aa).

The protein belongs to the TrpC family.

It carries out the reaction 1-(2-carboxyphenylamino)-1-deoxy-D-ribulose 5-phosphate + H(+) = (1S,2R)-1-C-(indol-3-yl)glycerol 3-phosphate + CO2 + H2O. The protein operates within amino-acid biosynthesis; L-tryptophan biosynthesis; L-tryptophan from chorismate: step 4/5. The protein is Indole-3-glycerol phosphate synthase of Staphylococcus epidermidis (strain ATCC 12228 / FDA PCI 1200).